We begin with the raw amino-acid sequence, 340 residues long: Holliday junction branch migration complex subunit RuvB (340 aa).

The interval 1 to 181 (MDRIVEIEKA…FGMQFRLNFY (181 aa)) is large ATPase domain (RuvB-L). ATP contacts are provided by residues Leu-20, Arg-21, Gly-62, Lys-65, Thr-66, Thr-67, 128–130 (EDF), Arg-171, Tyr-181, and Arg-218. Thr-66 is a binding site for Mg(2+). Residues 182 to 252 (TSDELAKIVQ…RAKSSLDALG (71 aa)) form a small ATPAse domain (RuvB-S) region. The segment at 255 to 340 (DLGFDEMDLK…TQKGLFDEDQ (86 aa)) is head domain (RuvB-H). Residues Arg-309 and Arg-314 each contribute to the DNA site.

This sequence belongs to the RuvB family. In terms of assembly, homohexamer. Forms an RuvA(8)-RuvB(12)-Holliday junction (HJ) complex. HJ DNA is sandwiched between 2 RuvA tetramers; dsDNA enters through RuvA and exits via RuvB. An RuvB hexamer assembles on each DNA strand where it exits the tetramer. Each RuvB hexamer is contacted by two RuvA subunits (via domain III) on 2 adjacent RuvB subunits; this complex drives branch migration. In the full resolvosome a probable DNA-RuvA(4)-RuvB(12)-RuvC(2) complex forms which resolves the HJ.

It is found in the cytoplasm. The catalysed reaction is ATP + H2O = ADP + phosphate + H(+). Functionally, the RuvA-RuvB-RuvC complex processes Holliday junction (HJ) DNA during genetic recombination and DNA repair, while the RuvA-RuvB complex plays an important role in the rescue of blocked DNA replication forks via replication fork reversal (RFR). RuvA specifically binds to HJ cruciform DNA, conferring on it an open structure. The RuvB hexamer acts as an ATP-dependent pump, pulling dsDNA into and through the RuvAB complex. RuvB forms 2 homohexamers on either side of HJ DNA bound by 1 or 2 RuvA tetramers; 4 subunits per hexamer contact DNA at a time. Coordinated motions by a converter formed by DNA-disengaged RuvB subunits stimulates ATP hydrolysis and nucleotide exchange. Immobilization of the converter enables RuvB to convert the ATP-contained energy into a lever motion, pulling 2 nucleotides of DNA out of the RuvA tetramer per ATP hydrolyzed, thus driving DNA branch migration. The RuvB motors rotate together with the DNA substrate, which together with the progressing nucleotide cycle form the mechanistic basis for DNA recombination by continuous HJ branch migration. Branch migration allows RuvC to scan DNA until it finds its consensus sequence, where it cleaves and resolves cruciform DNA. The protein is Holliday junction branch migration complex subunit RuvB of Campylobacter hominis (strain ATCC BAA-381 / DSM 21671 / CCUG 45161 / LMG 19568 / NCTC 13146 / CH001A).